Consider the following 335-residue polypeptide: Protease HtpX homolog (335 aa).

Helical transmembrane passes span 9 to 29 (VYMM…STIA), 42 to 62 (LFTS…AIIY), and 64 to 84 (ILAY…LLII). Histidine 168 lines the Zn(2+) pocket. The active site involves glutamate 169. Histidine 172 contacts Zn(2+). A run of 2 helical transmembrane segments spans residues 179 to 199 (AVML…YALL) and 213 to 233 (AAIG…VLAF). Residue glutamate 238 coordinates Zn(2+).

This sequence belongs to the peptidase M48B family. Zn(2+) serves as cofactor.

It localises to the cell membrane. This Archaeoglobus fulgidus (strain ATCC 49558 / DSM 4304 / JCM 9628 / NBRC 100126 / VC-16) protein is Protease HtpX homolog.